We begin with the raw amino-acid sequence, 144 residues long: Large ribosomal subunit protein uL15 (144 aa).

The tract at residues 1 to 48 is disordered; it reads MIKLESLQDPSPRKRRTKLLGRGPSSGHGKTSCRGHKGDGSRSGYKRR.

The protein belongs to the universal ribosomal protein uL15 family. Part of the 50S ribosomal subunit.

Its function is as follows. Binds to the 23S rRNA. This is Large ribosomal subunit protein uL15 from Chlamydia abortus (strain DSM 27085 / S26/3) (Chlamydophila abortus).